The chain runs to 857 residues: Facilitated trehalose transporter Tret1-1 (857 aa).

Disordered regions lie at residues 1–28 (MSGR…KLKE) and 62–203 (DPFL…KATS). The Cytoplasmic segment spans residues 1-392 (MSGRDSRGAG…VYRPTTNPIY (392 aa)). The segment covering 69-81 (VSPQRHPQNTVRT) has biased composition (polar residues). Residues 134 to 143 (EIREHRDRQQ) show a composition bias toward basic and acidic residues. Positions 171–181 (GNSNTNSNKAA) are enriched in polar residues. Phosphoserine occurs at positions 248, 249, 250, 320, and 322. Residues 327–346 (LTSRQHFQQQRSISTDSRKS) form a disordered region. Polar residues predominate over residues 330-341 (RQHFQQQRSIST). The helical transmembrane segment at 393 to 413 (IWTQVLAALSVSLGSLVVGFV) threads the bilayer. Over 414–440 (SAYTSPALVSMTDRNITSFEVTQDAGS) the chain is Extracellular. N-linked (GlcNAc...) asparagine glycosylation occurs at Asn-428. Residues 441–461 (WVGGIMPLAGLAGGIAGGPLI) traverse the membrane as a helical segment. At 462 to 473 (EYLGRRNTILAT) the chain is on the cytoplasmic side. A helical transmembrane segment spans residues 474-494 (AVPFIVSSLLIACAVNVAMVL). At 495-497 (CGR) the chain is on the extracellular side. A helical transmembrane segment spans residues 498 to 518 (FLAGFCVGIASLSLPVYLGET). The Cytoplasmic segment spans residues 519 to 528 (VQPEVRGTLG). Residues 529 to 549 (LLPTAFGNIGILLCFVAGSFM) traverse the membrane as a helical segment. Asn-550 is a glycosylation site (N-linked (GlcNAc...) asparagine). Topologically, residues 550–552 (NWS) are extracellular. A helical transmembrane segment spans residues 553–573 (MLAFLGAALPVPFLILMFLIP). Residues 574-636 (ETPRWFVGRG…ELFKRINLKP (63 aa)) are Cytoplasmic-facing. A helical transmembrane segment spans residues 637–657 (LSISLGLMFFQQFSGINAVIF). Residues 658–673 (YTVQIFKDAGSTIDSN) are Extracellular-facing. The chain crosses the membrane as a helical span at residues 674–694 (LCTIIVGIVNFFATFMGILLI). The Cytoplasmic segment spans residues 695-700 (DRLGRK). Residues 701–721 (ILLYISDIAMILTLSILGGFF) traverse the membrane as a helical segment. The Extracellular segment spans residues 722–740 (YCKAHGPDVSHLGWLPLTC). The chain crosses the membrane as a helical span at residues 741–761 (FVIYILGFSLGFGPIPWLMMG). The Cytoplasmic portion of the chain corresponds to 762 to 770 (EILPAKIRG). A helical membrane pass occupies residues 771 to 791 (PAASVVTAFNWFCTFVVTKTF). Over 792–801 (QDLTGAMGAH) the chain is Extracellular. A helical transmembrane segment spans residues 802–822 (GAFWLFGAICFVGLFFVIIYV). Over 823-857 (PETQGKTLEDIERKMMGRVRRMSSVANIKPLSFNM) the chain is Cytoplasmic. Ser-845 and Ser-846 each carry phosphoserine.

The protein belongs to the major facilitator superfamily. Sugar transporter (TC 2.A.1.1) family. Trehalose transporter subfamily.

The protein resides in the cell membrane. In terms of biological role, low-capacity facilitative transporter for trehalose. Does not transport maltose, sucrose or lactose. Mediates the bidirectional transfer of trehalose. Responsible for the transport of trehalose synthesized in the fat body and the incorporation of trehalose into other tissues that require a carbon source, thereby regulating trehalose levels in the hemolymph. This chain is Facilitated trehalose transporter Tret1-1, found in Drosophila simulans (Fruit fly).